Here is a 704-residue protein sequence, read N- to C-terminus: Phosphoribosylformylglycinamidine synthase subunit PurL (704 aa).

Residue H32 is part of the active site. Y35 lines the ATP pocket. E76 is a Mg(2+) binding site. Residues 77 to 80 (SHNH) and R99 contribute to the substrate site. Residue H78 is the Proton acceptor of the active site. D100 serves as a coordination point for Mg(2+). Position 224 (Q224) interacts with substrate. D252 provides a ligand contact to Mg(2+). 296–298 (ESQ) lines the substrate pocket. ATP is bound by residues D471 and G508. Mg(2+) is bound at residue N509. S511 is a binding site for substrate.

The protein belongs to the FGAMS family. Monomer. Part of the FGAM synthase complex composed of 1 PurL, 1 PurQ and 2 PurS subunits.

It localises to the cytoplasm. The catalysed reaction is N(2)-formyl-N(1)-(5-phospho-beta-D-ribosyl)glycinamide + L-glutamine + ATP + H2O = 2-formamido-N(1)-(5-O-phospho-beta-D-ribosyl)acetamidine + L-glutamate + ADP + phosphate + H(+). The protein operates within purine metabolism; IMP biosynthesis via de novo pathway; 5-amino-1-(5-phospho-D-ribosyl)imidazole from N(2)-formyl-N(1)-(5-phospho-D-ribosyl)glycinamide: step 1/2. Its function is as follows. Part of the phosphoribosylformylglycinamidine synthase complex involved in the purines biosynthetic pathway. Catalyzes the ATP-dependent conversion of formylglycinamide ribonucleotide (FGAR) and glutamine to yield formylglycinamidine ribonucleotide (FGAM) and glutamate. The FGAM synthase complex is composed of three subunits. PurQ produces an ammonia molecule by converting glutamine to glutamate. PurL transfers the ammonia molecule to FGAR to form FGAM in an ATP-dependent manner. PurS interacts with PurQ and PurL and is thought to assist in the transfer of the ammonia molecule from PurQ to PurL. This chain is Phosphoribosylformylglycinamidine synthase subunit PurL, found in Pyrococcus furiosus (strain ATCC 43587 / DSM 3638 / JCM 8422 / Vc1).